Here is a 308-residue protein sequence, read N- to C-terminus: NADH-cytochrome b5 reductase 1 (308 aa).

A helical transmembrane segment spans residues 10-27 (INGVYIPSALLIFGTTII). An FAD-binding FR-type domain is found at 59-164 (TEFQNFVLKD…RGPKGAMVYT (106 aa)). Residues 144–159 (TTLR…GPKG) and 170–207 (HIGM…QIDL) each bind FAD.

The protein belongs to the flavoprotein pyridine nucleotide cytochrome reductase family. As to quaternary structure, monomer. Component of the 2-(3-amino-3-carboxypropyl)histidine synthase complex composed of DPH1, DPH2, DPH3 and a NADH-dependent reductase, predominantly CBR1. It depends on FAD as a cofactor.

The protein resides in the mitochondrion outer membrane. It catalyses the reaction 2 Fe(III)-[cytochrome b5] + NADH = 2 Fe(II)-[cytochrome b5] + NAD(+) + H(+). It carries out the reaction 2 Fe(3+)-[Dph3] + NADH = 2 Fe(2+)-[Dph3] + NAD(+) + H(+). The protein operates within protein modification; peptidyl-diphthamide biosynthesis. NADH-dependent reductase for DPH3 and cytochrome b5. Required for the first step of diphthamide biosynthesis, a post-translational modification of histidine which occurs in elongation factor 2. DPH1 and DPH2 transfer a 3-amino-3-carboxypropyl (ACP) group from S-adenosyl-L-methionine (SAM) to a histidine residue, the reaction is assisted by a reduction system comprising DPH3 and a NADH-dependent reductase, predominantly CBR1. By reducing DPH3, also involved in the formation of the tRNA wobble base modification mcm5s 2U (5-methoxycarbonylmethyl-2-thiouridine), mediated by the elongator complex. The cytochrome b5/NADH cytochrome b5 reductase electron transfer system supports the catalytic activity of several sterol biosynthetic enzymes. This is NADH-cytochrome b5 reductase 1 (CBR1) from Coccidioides immitis (strain RS) (Valley fever fungus).